The following is a 419-amino-acid chain: Gamma-glutamyl phosphate reductase (419 aa).

It belongs to the gamma-glutamyl phosphate reductase family.

It localises to the cytoplasm. It carries out the reaction L-glutamate 5-semialdehyde + phosphate + NADP(+) = L-glutamyl 5-phosphate + NADPH + H(+). It participates in amino-acid biosynthesis; L-proline biosynthesis; L-glutamate 5-semialdehyde from L-glutamate: step 2/2. Catalyzes the NADPH-dependent reduction of L-glutamate 5-phosphate into L-glutamate 5-semialdehyde and phosphate. The product spontaneously undergoes cyclization to form 1-pyrroline-5-carboxylate. The polypeptide is Gamma-glutamyl phosphate reductase (Nitratidesulfovibrio vulgaris (strain ATCC 29579 / DSM 644 / CCUG 34227 / NCIMB 8303 / VKM B-1760 / Hildenborough) (Desulfovibrio vulgaris)).